Reading from the N-terminus, the 462-residue chain is MSEEQPHANLAVPAFKTEKEPITQTRNGQSSVWRFGGSDKAAKASTVTLRGVIYMLFDNCGKDVNKTILPLGHGDPSVYPCFRTCIEAEDAVVDVLRSGKGNSYGPGAGILPARRAVADYMNRDLPHKLTPEDIFLTAGCNQGIEIVFESLARPNANILLPRPGFPHYDARAAYSGLEVRKFDLLPEKEWEIDLEGIEAIADENTVAMVVINPNNPCGNVYSHDHLKKVAETARKLGIMVISDEVYDRTIFGDNPFVSMGKFASIVPVLTLAGISKGWVVPGWKIGWIALNDPEGVFETTKVLQSIKQNLDVTPDPATIIQAALPAILEKADKNFFAKKNKILKHNVDLVCDRLKDIPCVVCPKKPESCTYLLTKLELSLMDNIKDDIDFCVKLAREENLVFLPGDALGLKNWMRITIGVEAHMLEDALERLKGFCTRHAKKTETETESLQALKLSDNNLEM.

This sequence belongs to the class-I pyridoxal-phosphate-dependent aminotransferase family. It depends on pyridoxal 5'-phosphate as a cofactor.

Functionally, C-S lyase involved in glucosinolate biosynthesis. Converts S-(alkylacetohydroximoyl)-L-cysteine to thiohydroximate. Functions in auxin homeostasis. Probably required for glucosinolate activation in response to pathogens. In Arabidopsis thaliana (Mouse-ear cress), this protein is S-alkyl-thiohydroximate lyase SUR1 (SUR1).